A 211-amino-acid polypeptide reads, in one-letter code: 3-demethoxyubiquinol 3-hydroxylase (211 aa).

Positions 60, 90, 93, 142, 174, and 177 each coordinate Fe cation.

This sequence belongs to the COQ7 family. It depends on Fe cation as a cofactor.

It localises to the cell membrane. The enzyme catalyses a 5-methoxy-2-methyl-3-(all-trans-polyprenyl)benzene-1,4-diol + AH2 + O2 = a 3-demethylubiquinol + A + H2O. It functions in the pathway cofactor biosynthesis; ubiquinone biosynthesis. Catalyzes the hydroxylation of 2-nonaprenyl-3-methyl-6-methoxy-1,4-benzoquinol during ubiquinone biosynthesis. This chain is 3-demethoxyubiquinol 3-hydroxylase, found in Acinetobacter baylyi (strain ATCC 33305 / BD413 / ADP1).